We begin with the raw amino-acid sequence, 284 residues long: Tropomyosin (284 aa).

Residues 1 to 284 (MDAIKKKMLM…DQALNELHNM (284 aa)) are a coiled coil. 2 disordered regions span residues 106-134 (LNST…ENRQ) and 186-221 (AETK…EEAY). Composition is skewed to basic and acidic residues over residues 112–134 (KLTD…ENRQ) and 186–198 (AETK…DELK).

It belongs to the tropomyosin family. In terms of assembly, homodimer.

Its function is as follows. Tropomyosin, in association with the troponin complex, plays a central role in the calcium dependent regulation of muscle contraction. In Branchiostoma belcheri (Amphioxus), this protein is Tropomyosin (TPM).